Reading from the N-terminus, the 497-residue chain is Subtilisin-like protease CPC735_031240 (497 aa).

The first 16 residues, 1–16, serve as a signal peptide directing secretion; sequence MKGVLSLSLLPLLAAP. Residues 17-136 constitute a propeptide that is removed on maturation; it reads SPILVDTIHR…IEKDSEVHAW (120 aa). An Inhibitor I9 domain is found at 43–134; that stretch reads SYIVVFKKNV…QYIEKDSEVH (92 aa). The Peptidase S8 domain occupies 146-452; it reads PWGLARVSHR…GGSSNYTAII (307 aa). Catalysis depends on charge relay system residues Asp182 and His214. N-linked (GlcNAc...) asparagine glycosylation is found at Asn244 and Asn284. Ser380 (charge relay system) is an active-site residue. Asn447 carries an N-linked (GlcNAc...) asparagine glycan.

Belongs to the peptidase S8 family.

It is found in the secreted. Its function is as follows. Secreted subtilisin-like serine protease with keratinolytic activity that contributes to pathogenicity. This is Subtilisin-like protease CPC735_031240 from Coccidioides posadasii (strain C735) (Valley fever fungus).